The sequence spans 521 residues: Probable feruloyl esterase B-2 (521 aa).

The N-terminal stretch at Met1–Ala19 is a signal peptide. 5 N-linked (GlcNAc...) asparagine glycosylation sites follow: Asn13, Asn53, Asn85, Asn98, and Asn138. Intrachain disulfides connect Cys28–Cys75 and Cys63–Cys114. Intrachain disulfides connect Cys187/Cys440, Cys257/Cys274, Cys283/Cys291, and Cys506/Cys520. Ser188 acts as the Acyl-ester intermediate in catalysis. Residue Asn235 is glycosylated (N-linked (GlcNAc...) asparagine). 5 residues coordinate Ca(2+): Asp258, Asp261, Val263, Asp265, and Ile267. The active-site Charge relay system is the Asp399. An N-linked (GlcNAc...) asparagine glycan is attached at Asn419. Catalysis depends on His439, which acts as the Charge relay system.

Belongs to the tannase family.

It is found in the secreted. The catalysed reaction is feruloyl-polysaccharide + H2O = ferulate + polysaccharide.. Involved in degradation of plant cell walls. Hydrolyzes the feruloyl-arabinose ester bond in arabinoxylans as well as the feruloyl-galactose and feruloyl-arabinose ester bonds in pectin. The sequence is that of Probable feruloyl esterase B-2 (faeB-2) from Aspergillus flavus (strain ATCC 200026 / FGSC A1120 / IAM 13836 / NRRL 3357 / JCM 12722 / SRRC 167).